The chain runs to 245 residues: Retrovirus-related Pol polyprotein from type-1 retrotransposable element R1 (245 aa).

The Reverse transcriptase domain maps to leucine 1–alanine 105. Residues glutamate 106–glutamine 245 are nucleic acid-binding endonuclease.

The catalysed reaction is DNA(n) + a 2'-deoxyribonucleoside 5'-triphosphate = DNA(n+1) + diphosphate. The sequence is that of Retrovirus-related Pol polyprotein from type-1 retrotransposable element R1 from Popillia japonica (Japanese beetle).